Consider the following 476-residue polypeptide: MNILFAVSECVPFVKSGGLADVAGALPKELKKLGVEVRIILPNYSLIPQKLRDGCTLHKVINVPLGWRNQYCGILKGEQDGITYYLIDNEYYFKRDSLYGHYDDGERFSYFSKAVLECIPHLDFEVDVLHSHDWHTAMVNFLLREKYQDNPLYEHIKTVYTIHNLQFQGVFPPEVMYDLLELGDEYFHSEQLEFYGNVNFMKGGIIASDQITAVSPTYKEEIQYEFFGEKLDGLLRKYNDKLSGIVNGIDTSVYNPETDSYITAQYDAGSLYEKNENKRALQRYFGLPEKEDTPIISMVTRLTKQKGLDLVRTVFREIMEEDVQCIILGSGDSEYEQFFEWMAYEYPEKVKVYIGFNEELAHQVYAGSDLFLMPSLFEPCGLGQLIALAYGTIPIVRETGGLNDTVQSYDEETGEGNGFSFTNFNAHDMLHTVLRAIEFYHDKPVWEQLVKQAMTEDYSWEKSALAYKKLYKGLME.

Residue Lys-15 participates in ADP-alpha-D-glucose binding.

The protein belongs to the glycosyltransferase 1 family. Bacterial/plant glycogen synthase subfamily.

The catalysed reaction is [(1-&gt;4)-alpha-D-glucosyl](n) + ADP-alpha-D-glucose = [(1-&gt;4)-alpha-D-glucosyl](n+1) + ADP + H(+). It functions in the pathway glycan biosynthesis; glycogen biosynthesis. Synthesizes alpha-1,4-glucan chains using ADP-glucose. This is Glycogen synthase from Bacillus cereus (strain ZK / E33L).